We begin with the raw amino-acid sequence, 427 residues long: Indole diterpene prenyltransferase penD (427 aa).

77–78 (YV) provides a ligand contact to L-tryptophan. 9 residues coordinate substrate: Arg99, Lys186, Tyr188, Arg259, Lys261, Tyr263, Tyr344, Tyr409, and Tyr413.

The protein belongs to the tryptophan dimethylallyltransferase family.

Its pathway is secondary metabolite biosynthesis. Its function is as follows. Indole diterpene prenyltransferase; part of the gene cluster that mediates the biosynthesis of the indole diterpenes penitrems. The geranylgeranyl diphosphate (GGPP) synthase penG catalyzes the first step in penitrem biosynthesis via conversion of farnesyl pyrophosphate and isopentyl pyrophosphate into geranylgeranyl pyrophosphate (GGPP). Condensation of indole-3-glycerol phosphate with GGPP by the prenyl transferase penC then forms 3-geranylgeranylindole (3-GGI). Epoxidation by the FAD-dependent monooxygenase penM leads to a epoxidized-GGI that is substrate of the terpene cyclase penB for cyclization to yield paspaline. Paspaline is subsequently converted to 13-desoxypaxilline by the cytochrome P450 monooxygenase penP, the latter being then converted to paxilline by the cytochrome P450 monooxygenase penQ. Paxilline is converted to beta-paxitriol via C-10 ketoreduction by the short-chain dehydrogenase PC-15 which can be monoprenylated at the C-20 by the indole diterpene prenyltransferase penD. A two-step elimination (acetylation and elimination) process performed by the O-acetyltransferase PC-16 and the P.simplicissimum ptmI-ortholog not yet identified in P.crustosum, leads to the production of the prenylated form of penijanthine. The FAD-linked oxidoreductase ptmO then converts the prenylated form of penijanthine into PC-M5 which is in turn transformed into PC-M4 by the aromatic dimethylallyltransferase PC-22. A series of oxidation steps involving 4 cytochrome P450 monooxygenases (PC-21, PC-05, PC-23, PC-20) and a FAD-dependent monooxygenase (PC-14) are required for the transformation of PC-M4 to penitrems A and E. Synthesis of these final products is proposed to proceed via penitrems D and C (PC-21, PC-05, PC-14) and penitrems B and F (PC-21, PC-05, PC-14, PC-23). The chain is Indole diterpene prenyltransferase penD from Penicillium crustosum (Blue mold fungus).